Consider the following 108-residue polypeptide: Pyrimidine/purine nucleoside phosphorylase (108 aa).

This sequence belongs to the nucleoside phosphorylase PpnP family.

The catalysed reaction is a purine D-ribonucleoside + phosphate = a purine nucleobase + alpha-D-ribose 1-phosphate. It carries out the reaction adenosine + phosphate = alpha-D-ribose 1-phosphate + adenine. It catalyses the reaction cytidine + phosphate = cytosine + alpha-D-ribose 1-phosphate. The enzyme catalyses guanosine + phosphate = alpha-D-ribose 1-phosphate + guanine. The catalysed reaction is inosine + phosphate = alpha-D-ribose 1-phosphate + hypoxanthine. It carries out the reaction thymidine + phosphate = 2-deoxy-alpha-D-ribose 1-phosphate + thymine. It catalyses the reaction uridine + phosphate = alpha-D-ribose 1-phosphate + uracil. The enzyme catalyses xanthosine + phosphate = alpha-D-ribose 1-phosphate + xanthine. Functionally, catalyzes the phosphorolysis of diverse nucleosides, yielding D-ribose 1-phosphate and the respective free bases. Can use uridine, adenosine, guanosine, cytidine, thymidine, inosine and xanthosine as substrates. Also catalyzes the reverse reactions. This Acinetobacter baylyi (strain ATCC 33305 / BD413 / ADP1) protein is Pyrimidine/purine nucleoside phosphorylase.